A 131-amino-acid polypeptide reads, in one-letter code: Small ribosomal subunit protein uS11 (131 aa).

It belongs to the universal ribosomal protein uS11 family. Part of the 30S ribosomal subunit. Interacts with proteins S7 and S18. Binds to IF-3.

Functionally, located on the platform of the 30S subunit, it bridges several disparate RNA helices of the 16S rRNA. Forms part of the Shine-Dalgarno cleft in the 70S ribosome. This is Small ribosomal subunit protein uS11 from Helicobacter pylori (strain ATCC 700392 / 26695) (Campylobacter pylori).